Reading from the N-terminus, the 239-residue chain is Probable transcriptional regulatory protein lin0388 (239 aa).

It belongs to the TACO1 family. YeeN subfamily.

Its subcellular location is the cytoplasm. This is Probable transcriptional regulatory protein lin0388 from Listeria innocua serovar 6a (strain ATCC BAA-680 / CLIP 11262).